A 229-amino-acid polypeptide reads, in one-letter code: Heptahelical transmembrane protein ADIPOR2 (229 aa).

The Cytoplasmic portion of the chain corresponds to 1 to 4; sequence MQGA. A helical transmembrane segment spans residues 5-25; the sequence is ASHDAAAAAAAAAVLGGGHGV. Residues 26 to 30 are Extracellular-facing; that stretch reads PRWPR. A helical membrane pass occupies residues 31 to 51; sequence MVFLVGAMTCLAISATAHLLA. Topologically, residues 52 to 66 are cytoplasmic; sequence CHSRRASVVFWQLDY. Residues 67-87 traverse the membrane as a helical segment; it reads AGISAMIVASFVPPVYYAFLC. Over 88–92 the chain is Extracellular; that stretch reads HRPAR. Residues 93–113 traverse the membrane as a helical segment; it reads VAYLSAISALGALVVGALLSP. The Cytoplasmic portion of the chain corresponds to 114–124; it reads PCSSPRFRRLR. A helical transmembrane segment spans residues 125-145; the sequence is AALFLAMGLSGVVPALHALWL. Residues 146–153 are Extracellular-facing; the sequence is NWGHAACY. A helical membrane pass occupies residues 154–174; it reads LALSLEVAMGLAYAAGAWFYV. Residues 175 to 194 lie on the Cytoplasmic side of the membrane; sequence SRVPEKWRPGVFDVVGHSHQ. A helical membrane pass occupies residues 195–215; the sequence is IFHVLVLVGAVTHYVAVDVLL. The Extracellular portion of the chain corresponds to 216–229; the sequence is NWRETVAAACSATS.

Belongs to the ADIPOR family.

Its subcellular location is the membrane. In terms of biological role, may play a role in abiotic stress response. The protein is Heptahelical transmembrane protein ADIPOR2 (ADIPOR2) of Oryza sativa subsp. japonica (Rice).